A 200-amino-acid chain; its full sequence is TATA-box-binding protein (200 aa).

Tandem repeats lie at residues 25–101 (LQNI…ARII) and 115–192 (IQNI…YPVL).

Belongs to the TBP family. Belongs to the TFIID complex together with the TBP-associated factors (TAFs). Binds DNA as monomer.

Its subcellular location is the nucleus. General transcription factor that functions at the core of the DNA-binding multiprotein factor TFIID. Binding of TFIID to the TATA box is the initial transcriptional step of the pre-initiation complex (PIC), playing a role in the activation of eukaryotic genes transcribed by RNA polymerase II. In Solanum tuberosum (Potato), this protein is TATA-box-binding protein (TBP).